The following is a 658-amino-acid chain: UvrABC system protein C (658 aa).

Positions 62-140 (PKPGVYRMLD…IKRFRPPYNV (79 aa)) constitute a GIY-YIG domain. In terms of domain architecture, UVR spans 250–285 (GAVQREIEAQMHKAAEDLDFERAAMLRDRLRAATFI).

The protein belongs to the UvrC family. In terms of assembly, interacts with UvrB in an incision complex.

It is found in the cytoplasm. The UvrABC repair system catalyzes the recognition and processing of DNA lesions. UvrC both incises the 5' and 3' sides of the lesion. The N-terminal half is responsible for the 3' incision and the C-terminal half is responsible for the 5' incision. This chain is UvrABC system protein C, found in Novosphingobium aromaticivorans (strain ATCC 700278 / DSM 12444 / CCUG 56034 / CIP 105152 / NBRC 16084 / F199).